Here is an 870-residue protein sequence, read N- to C-terminus: NEDD4-like E3 ubiquitin-protein ligase WWP2 (870 aa).

One can recognise a C2 domain in the interval 1-117 (MASASSSRAG…KNNGGKMENM (117 aa)). The interval 151 to 299 (VPNGSALTDG…QQLPAAAQAP (149 aa)) is disordered. Polar residues-rich tracts occupy residues 152-171 (PNGS…SSGT) and 200-210 (SARTTPATGEQ). Residue Ser211 is modified to Phosphoserine. Polar residues-rich tracts occupy residues 222–243 (VKNS…TTAT) and 263–272 (VTPNPNTTSL). The segment covering 290–299 (QQLPAAAQAP) has biased composition (low complexity). 4 WW domains span residues 300-333 (DALP…RPLP), 330-363 (RPLP…RPTA), 405-437 (GPLP…DPRT), and 444-477 (PALP…DPRP). In terms of domain architecture, HECT spans 536 to 870 (KPYDLRRRLY…IEETEGFGQE (335 aa)). Cys838 (glycyl thioester intermediate) is an active-site residue.

In terms of assembly, interacts with POU5F1, RBP1, EGR2 and SLC11A2. Interacts with SCNN1A, SCNN1B, SCNN1G, WBP1, WBP2 and ATN1. Interacts with ERBB4, NDFIP1 and NDFIP2. Interacts with ARRDC4. Interacts (via WW domains) with ARRDC1 (via PPxY motifs); ubiquitinates ARRDC1. Interacts (via WW domains) with ARRDC2 and ARRDC3. (Microbial infection) Interacts with adenovirus type 2 PIII. Post-translationally, autoubiquitinated. Ubiquitinated by the SCF(FBXL15) complex, leading to its degradation by the proteasome. In terms of tissue distribution, detected in heart, throughout the brain, placenta, lung, liver, muscle, kidney and pancreas. Also detected in spleen and peripheral blood leukocytes.

Its subcellular location is the nucleus. It carries out the reaction S-ubiquitinyl-[E2 ubiquitin-conjugating enzyme]-L-cysteine + [acceptor protein]-L-lysine = [E2 ubiquitin-conjugating enzyme]-L-cysteine + N(6)-ubiquitinyl-[acceptor protein]-L-lysine.. It functions in the pathway protein modification; protein ubiquitination. With respect to regulation, activated by NDFIP1- and NDFIP2-binding. Functionally, E3 ubiquitin-protein ligase which accepts ubiquitin from an E2 ubiquitin-conjugating enzyme in the form of a thioester and then directly transfers the ubiquitin to targeted substrates. Polyubiquitinates POU5F1 by 'Lys-63'-linked conjugation and promotes it to proteasomal degradation; in embryonic stem cells (ESCs) the ubiquitination is proposed to regulate POU5F1 protein level. Ubiquitinates EGR2 and promotes it to proteasomal degradation; in T-cells the ubiquitination inhibits activation-induced cell death. Ubiquitinates SLC11A2; the ubiquitination is enhanced by presence of NDFIP1 and NDFIP2. Ubiquitinates RPB1 and promotes it to proteasomal degradation. The polypeptide is NEDD4-like E3 ubiquitin-protein ligase WWP2 (WWP2) (Homo sapiens (Human)).